Reading from the N-terminus, the 555-residue chain is Formate--tetrahydrofolate ligase (555 aa).

65 to 72 (TPAGEGKT) provides a ligand contact to ATP.

Belongs to the formate--tetrahydrofolate ligase family.

The catalysed reaction is (6S)-5,6,7,8-tetrahydrofolate + formate + ATP = (6R)-10-formyltetrahydrofolate + ADP + phosphate. It functions in the pathway one-carbon metabolism; tetrahydrofolate interconversion. This Thermoanaerobacter pseudethanolicus (strain ATCC 33223 / 39E) (Clostridium thermohydrosulfuricum) protein is Formate--tetrahydrofolate ligase.